The sequence spans 155 residues: Large ribosomal subunit protein uL11 (155 aa).

Belongs to the universal ribosomal protein uL11 family. Part of the ribosomal stalk of the 50S ribosomal subunit. Interacts with L10 and the large rRNA to form the base of the stalk. L10 forms an elongated spine to which L12 dimers bind in a sequential fashion forming a multimeric L10(L12)X complex. In terms of processing, one or more lysine residues are methylated.

Its function is as follows. Forms part of the ribosomal stalk which helps the ribosome interact with GTP-bound translation factors. The chain is Large ribosomal subunit protein uL11 from Malacoplasma penetrans (strain HF-2) (Mycoplasma penetrans).